Reading from the N-terminus, the 147-residue chain is Cytochrome c-type biogenesis protein CcmE (147 aa).

Topologically, residues 1-9 (MKSLKKKRR) are cytoplasmic. The chain crosses the membrane as a helical; Signal-anchor for type II membrane protein span at residues 10-30 (IQILVAAAVALVLAVGLIGYG). The Periplasmic segment spans residues 31 to 147 (FRDGINLYRS…EQGVYQEPNS (117 aa)). Residues His-123 and Tyr-127 each coordinate heme.

It belongs to the CcmE/CycJ family.

Its subcellular location is the cell inner membrane. Functionally, heme chaperone required for the biogenesis of c-type cytochromes. Transiently binds heme delivered by CcmC and transfers the heme to apo-cytochromes in a process facilitated by CcmF and CcmH. The polypeptide is Cytochrome c-type biogenesis protein CcmE (Paracoccus denitrificans (strain Pd 1222)).